The sequence spans 356 residues: 4-hydroxy-2-oxovalerate aldolase (356 aa).

The region spanning 7–257 is the Pyruvate carboxyltransferase domain; that stretch reads PRVTDTTLRD…NPGLDVFKLM (251 aa). A substrate-binding site is contributed by 15–16; the sequence is RD. Asp-16 provides a ligand contact to Mn(2+). His-19 functions as the Proton acceptor in the catalytic mechanism. The substrate site is built by Ser-169 and His-196. Mn(2+) contacts are provided by His-196 and His-198. Tyr-287 is a substrate binding site.

This sequence belongs to the 4-hydroxy-2-oxovalerate aldolase family.

It carries out the reaction (S)-4-hydroxy-2-oxopentanoate = acetaldehyde + pyruvate. This chain is 4-hydroxy-2-oxovalerate aldolase, found in Thermomicrobium roseum (strain ATCC 27502 / DSM 5159 / P-2).